The following is a 359-amino-acid chain: MESKGRIHPSHHHMRRPLPGPGGCIAHPETFGNHGAIPPSAAQGVYPSFNMLPPPEVMEQKFVAQHGELQRLAIENQRLGGTHGSLRQELAAAQHEIQMLHAQIGSMKSEREQRMMGLAEKVAKMETELQKSEAVKLEMQQARAEARSLVVAREELMSKVHQLTQELQKSRSDVQQIPALMSELENLRQEYQQCRATYDYEKKFYNDHLESLQAMEKNYMTMAREVEKLQAQLMNNANSDRRAGGPYGNNINAEIDASGHQSGNGYYEDAFGPQGYIPQPVAGNATGPNSVVGAAQYPYQGVTQPGYFPQRPGYNFPRGPPGSYDPTTRLPTGPYGAPFPPGPSNNTPYAGTHGNPSRR.

Over residues 1-16 the composition is skewed to basic residues; the sequence is MESKGRIHPSHHHMRR. Residues 1–27 are disordered; the sequence is MESKGRIHPSHHHMRRPLPGPGGCIAH. A coiled-coil region spans residues 83-236; the sequence is HGSLRQELAA…EKLQAQLMNN (154 aa). A disordered region spans residues 303–359; the sequence is TQPGYFPQRPGYNFPRGPPGSYDPTTRLPTGPYGAPFPPGPSNNTPYAGTHGNPSRR.

It belongs to the FLX family. As to quaternary structure, interacts with FRI.

Has no transcriptional activation activity. The protein is Protein FLX-like 2 (FLXL2) of Arabidopsis thaliana (Mouse-ear cress).